Consider the following 216-residue polypeptide: Probable GTP-binding protein EngB (216 aa).

One can recognise an EngB-type G domain in the interval 24-205; the sequence is ATPEIAFVGR…WARLAALAAE (182 aa). GTP is bound by residues 32–39, 59–63, 86–89, 153–156, and 184–186; these read GRSNVGKS, GRTRA, DLPG, TKTD, and FSA. Serine 39 and threonine 61 together coordinate Mg(2+).

This sequence belongs to the TRAFAC class TrmE-Era-EngA-EngB-Septin-like GTPase superfamily. EngB GTPase family. It depends on Mg(2+) as a cofactor.

In terms of biological role, necessary for normal cell division and for the maintenance of normal septation. The chain is Probable GTP-binding protein EngB from Anaeromyxobacter dehalogenans (strain 2CP-C).